Here is a 428-residue protein sequence, read N- to C-terminus: Something about silencing protein 10 (428 aa).

A disordered region spans residues 1 to 93; that stretch reads MDSDGDDYVM…NTMDWGSKRS (93 aa). Composition is skewed to acidic residues over residues 15–24 and 46–62; these read QEYDDEEREI and SDDD…EQQD. A phosphoserine mark is found at serine 152, serine 323, serine 324, and serine 337. The interval 317-386 is disordered; it reads GQQASVSSDD…LRNPRVKHRG (70 aa). Positions 324–336 are enriched in acidic residues; sequence SDDDDNDDDDDAE. The span at 344–353 shows a compositional bias: acidic residues; it reads EEAGEEEEEE. Residues 370–386 are compositionally biased toward basic residues; sequence TPHRKKELRNPRVKHRG.

Belongs to the SAS10 family.

The protein resides in the nucleus. Its function is as follows. Essential for gene silencing: has a role in the structure of silenced chromatin. May be involved in gene regulation during development. Binds RNA. The protein is Something about silencing protein 10 of Drosophila melanogaster (Fruit fly).